The sequence spans 317 residues: Acetyl-coenzyme A carboxylase carboxyl transferase subunit alpha (317 aa).

The 255-residue stretch at 39 to 293 folds into the CoA carboxyltransferase C-terminal domain; it reads KLEGKAQEAL…GNAIAEAMGS (255 aa).

The protein belongs to the AccA family. As to quaternary structure, acetyl-CoA carboxylase is a heterohexamer composed of biotin carboxyl carrier protein (AccB), biotin carboxylase (AccC) and two subunits each of ACCase subunit alpha (AccA) and ACCase subunit beta (AccD).

It localises to the cytoplasm. The enzyme catalyses N(6)-carboxybiotinyl-L-lysyl-[protein] + acetyl-CoA = N(6)-biotinyl-L-lysyl-[protein] + malonyl-CoA. The protein operates within lipid metabolism; malonyl-CoA biosynthesis; malonyl-CoA from acetyl-CoA: step 1/1. Its function is as follows. Component of the acetyl coenzyme A carboxylase (ACC) complex. First, biotin carboxylase catalyzes the carboxylation of biotin on its carrier protein (BCCP) and then the CO(2) group is transferred by the carboxyltransferase to acetyl-CoA to form malonyl-CoA. The polypeptide is Acetyl-coenzyme A carboxylase carboxyl transferase subunit alpha (Azorhizobium caulinodans (strain ATCC 43989 / DSM 5975 / JCM 20966 / LMG 6465 / NBRC 14845 / NCIMB 13405 / ORS 571)).